Here is a 260-residue protein sequence, read N- to C-terminus: Pyridoxine 5'-phosphate synthase (260 aa).

3-amino-2-oxopropyl phosphate contacts are provided by Asn10 and Arg21. The active-site Proton acceptor is the His46. 2 residues coordinate 1-deoxy-D-xylulose 5-phosphate: Arg48 and His53. The active-site Proton acceptor is Glu76. Thr113 is a binding site for 1-deoxy-D-xylulose 5-phosphate. Catalysis depends on His204, which acts as the Proton donor. Residues Asp205 and 227–228 (GH) each bind 3-amino-2-oxopropyl phosphate.

Belongs to the PNP synthase family. Homooctamer; tetramer of dimers.

The protein localises to the cytoplasm. It carries out the reaction 3-amino-2-oxopropyl phosphate + 1-deoxy-D-xylulose 5-phosphate = pyridoxine 5'-phosphate + phosphate + 2 H2O + H(+). The protein operates within cofactor biosynthesis; pyridoxine 5'-phosphate biosynthesis; pyridoxine 5'-phosphate from D-erythrose 4-phosphate: step 5/5. Catalyzes the complicated ring closure reaction between the two acyclic compounds 1-deoxy-D-xylulose-5-phosphate (DXP) and 3-amino-2-oxopropyl phosphate (1-amino-acetone-3-phosphate or AAP) to form pyridoxine 5'-phosphate (PNP) and inorganic phosphate. In Xylella fastidiosa (strain M12), this protein is Pyridoxine 5'-phosphate synthase.